Consider the following 181-residue polypeptide: MKATRLAIPDVILFEPRVFGDDRGFFFESYNQRAFEEACGHPVSFVQDNHSRSARGVLRGLHYQIRQAQGKLVRATLGEVFDVAVDLRRGSPTFGQWVGERLSAENKRQMWIPAGFAHGFVVLSEYAEFLYKTTDFWAPEHERCIVWNDPELKIDWPLQDAPLLSEKDRQGKAFADADCFP.

Substrate is bound by residues Arg23, Glu28, 47 to 49 (QDN), and Arg59. The active-site Proton acceptor is His62. Residues Lys71 and His118 each coordinate substrate. Tyr131 functions as the Proton donor in the catalytic mechanism. Substrate is bound by residues Glu142 and Lys167.

This sequence belongs to the dTDP-4-dehydrorhamnose 3,5-epimerase family. As to quaternary structure, homodimer.

The enzyme catalyses dTDP-4-dehydro-6-deoxy-alpha-D-glucose = dTDP-4-dehydro-beta-L-rhamnose. It functions in the pathway carbohydrate biosynthesis; dTDP-L-rhamnose biosynthesis. Its pathway is bacterial outer membrane biogenesis; lipopolysaccharide biosynthesis. Functionally, catalyzes the epimerization of the C3' and C5'positions of dTDP-6-deoxy-D-xylo-4-hexulose, forming dTDP-6-deoxy-L-lyxo-4-hexulose. This is dTDP-4-dehydrorhamnose 3,5-epimerase (rmlC) from Pseudomonas aeruginosa (strain ATCC 15692 / DSM 22644 / CIP 104116 / JCM 14847 / LMG 12228 / 1C / PRS 101 / PAO1).